The chain runs to 334 residues: ADP-L-glycero-D-manno-heptose-6-epimerase (334 aa).

NADP(+) contacts are provided by residues 11 to 12 (FI), 32 to 33 (DN), K39, K54, 77 to 81 (QGACS), and N94. The Proton acceptor role is filled by Y141. Position 145 (K145) interacts with NADP(+). Residue N171 participates in substrate binding. NADP(+) contacts are provided by V172 and K180. The active-site Proton acceptor is the K180. Substrate is bound by residues R182, H189, 203–206 (FGSN), R216, and Y295.

The protein belongs to the NAD(P)-dependent epimerase/dehydratase family. HldD subfamily. In terms of assembly, homopentamer. The cofactor is NADP(+).

It catalyses the reaction ADP-D-glycero-beta-D-manno-heptose = ADP-L-glycero-beta-D-manno-heptose. It participates in nucleotide-sugar biosynthesis; ADP-L-glycero-beta-D-manno-heptose biosynthesis; ADP-L-glycero-beta-D-manno-heptose from D-glycero-beta-D-manno-heptose 7-phosphate: step 4/4. Its function is as follows. Catalyzes the interconversion between ADP-D-glycero-beta-D-manno-heptose and ADP-L-glycero-beta-D-manno-heptose via an epimerization at carbon 6 of the heptose. In Neisseria meningitidis serogroup C / serotype 2a (strain ATCC 700532 / DSM 15464 / FAM18), this protein is ADP-L-glycero-D-manno-heptose-6-epimerase.